A 405-amino-acid chain; its full sequence is MKVGFALVLLWSLPITNVLAELPQPQNLTLLTLNTQYVLTWDWDQTTTGNSVSFTVEYMAKYKMKMKKKNWSRVCERTTRTRCDLTGSDLHYLGMYVLRVRASADGVNSDWVNKDFCPDIDASLGPPSRVELAPVGNLLDVTISDPLTSTQHSMKEHVLFLYYRILYWSRSDDPQGLKPKVLDSSNNLVTLPELEAWTWYCVMIQSRYDYYNKTSSYTEPQCMQTEGDTPYGQIFLYFLVSMMVCFLLVLLSSYAFFRFYRGLKNTFYPSIQLPAHIQEYLCDSSPGSDMPRLITADSEAELCCDKLTICPEVVLLEIHVPPPLTAPPSELEQDSGRRIRQDSGDSGIYSTEGGSAQQGRSGGEPIRRDQEVDSWQTLEQVKMEEMGRELADERDLDEGVVDICV.

Positions 1–20 (MKVGFALVLLWSLPITNVLA) are cleaved as a signal peptide. The Extracellular portion of the chain corresponds to 21–233 (ELPQPQNLTL…QTEGDTPYGQ (213 aa)). 2 Fibronectin type-III domains span residues 22-123 (LPQP…IDAS) and 126-228 (PPSR…TEGD). Residues N27 and N70 are each glycosylated (N-linked (GlcNAc...) asparagine). Cystine bridges form between C75/C83 and C201/C222. Residue N212 is glycosylated (N-linked (GlcNAc...) asparagine). Residues 234-254 (IFLYFLVSMMVCFLLVLLSSY) traverse the membrane as a helical segment. Over 255–405 (AFFRFYRGLK…LDEGVVDICV (151 aa)) the chain is Cytoplasmic. The segment at 325–374 (TAPPSELEQDSGRRIRQDSGDSGIYSTEGGSAQQGRSGGEPIRRDQEVDS) is disordered. Over residues 334 to 343 (DSGRRIRQDS) the composition is skewed to basic and acidic residues. Residues 348–359 (IYSTEGGSAQQG) show a composition bias toward polar residues.

Belongs to the type II cytokine receptor family. As to quaternary structure, heterodimer with IFNAR2; forming the receptor for type I interferon.

The protein resides in the cell membrane. Functionally, together with IFNAR2, forms the heterodimeric receptor for type I interferons (including interferons alpha, beta, epsilon, omega and kappa). Type I interferon binding activates the JAK-STAT signaling cascade, resulting in transcriptional activation or repression of interferon-regulated genes that encode the effectors of the interferon response. Mechanistically, type I interferon-binding brings the IFNAR1 and IFNAR2 subunits into close proximity with one another, driving their associated Janus kinases (JAKs) (TYK2 bound to IFNAR1 and JAK1 bound to IFNAR2) to cross-phosphorylate one another. The activated kinases phosphorylate specific tyrosine residues on the intracellular domains of IFNAR1 and IFNAR2, forming docking sites for the STAT transcription factors. STAT proteins are then phosphorylated by the JAKs, promoting their translocation into the nucleus to regulate expression of interferon-regulated genes. This chain is Interferon alpha/beta receptor 1a, found in Oncorhynchus mykiss (Rainbow trout).